Reading from the N-terminus, the 284-residue chain is Ermin (284 aa).

The disordered stretch occupies residues 1–61 (MTDVPATFTQ…APTKGSQEER (61 aa)). Serine 73 carries the phosphoserine modification. Positions 108 to 251 (TFREGRQWEK…PTLGKKSDIS (144 aa)) are disordered. 2 stretches are compositionally biased toward basic and acidic residues: residues 126–140 (EIRRQKERITEQPLK) and 171–183 (LHSKHDEEQKVWD). Residues 184–200 (EEIDDDDDDNCNDDEDE) show a composition bias toward acidic residues. Over residues 201–220 (VRVIEFKKKHEEVSQFKEEG) the composition is skewed to basic and acidic residues. Phosphoserine occurs at positions 214, 226, 230, and 233. A compositionally biased stretch (low complexity) spans 225–235 (DSPLSSASSQA). Threonine 237 bears the Phosphothreonine mark. A binds actin region spans residues 265-284 (KIRKGNTKQRIDEFESMMHL).

As to quaternary structure, binds actin.

The protein localises to the cytoplasm. It is found in the cytoskeleton. Plays a role in cytoskeletal rearrangements during the late wrapping and/or compaction phases of myelinogenesis as well as in maintenance and stability of myelin sheath in the adult. May play an important role in late-stage oligodendroglia maturation, myelin/Ranvier node formation during CNS development, and in the maintenance and plasticity of related structures in the mature CNS. The sequence is that of Ermin (ERMN) from Pongo abelii (Sumatran orangutan).